The sequence spans 924 residues: Intercellular adhesion molecule 5 (924 aa).

A signal peptide spans 1 to 31 (MPGPSPGLRRALLGLWAALGLGLFGLSAVSQ). Over 32–835 (EPFWADLQPR…RITVRVAGPW (804 aa)) the chain is Extracellular. Ig-like C2-type domains follow at residues 48–130 (GGSL…PLPP), 135–235 (GENF…RLAA), 242–329 (GSER…LLTL), 337–402 (GQMV…SAEL), 408–486 (PRLD…VTLT), 491–568 (PALD…VAVT), 573–662 (PRFE…VVSA), 666–739 (PEMD…RTVT), and 746–830 (PVVA…ITVR). The N-linked (GlcNAc...) (high mannose) asparagine glycan is linked to asparagine 54. Intrachain disulfides connect cysteine 55/cysteine 99 and cysteine 59/cysteine 103. Asparagine 74 and asparagine 137 each carry an N-linked (GlcNAc...) asparagine glycan. Cysteine 142 and cysteine 198 are oxidised to a cystine. A phosphothreonine mark is found at threonine 182 and threonine 184. Residues asparagine 195 and asparagine 214 are each glycosylated (N-linked (GlcNAc...) asparagine). An intrachain disulfide couples cysteine 249 to cysteine 302. N-linked (GlcNAc...) asparagine glycans are attached at residues asparagine 303, asparagine 316, asparagine 371, and asparagine 397. A disulfide bridge connects residues cysteine 344 and cysteine 383. 3 cysteine pairs are disulfide-bonded: cysteine 415–cysteine 470, cysteine 498–cysteine 552, and cysteine 580–cysteine 645. Asparagine 583 and asparagine 646 each carry an N-linked (GlcNAc...) asparagine glycan. A disulfide bridge connects residues cysteine 673 and cysteine 725. Asparagine 764, asparagine 795, and asparagine 796 each carry an N-linked (GlcNAc...) asparagine glycan. A disulfide bridge connects residues cysteine 769 and cysteine 814. Residues 836 to 856 (LWVAVGGAAGGAALLAAGAGL) traverse the membrane as a helical segment. Topologically, residues 857-924 (AFYVQSTACK…EVFAIQLTSA (68 aa)) are cytoplasmic. Gly residues predominate over residues 891-903 (AGGAAGAEGGPEA). The interval 891 to 911 (AGGAAGAEGGPEAAGGAAESP) is disordered.

The protein belongs to the immunoglobulin superfamily. ICAM family. Glycosylation at Asn-54 is critical for functional folding. Expressed on neurons in the most rostral segment of the mammalian brain, the telencephalon.

It is found in the membrane. In terms of biological role, ICAM proteins are ligands for the leukocyte adhesion protein LFA-1 (integrin alpha-L/beta-2). The chain is Intercellular adhesion molecule 5 (ICAM5) from Homo sapiens (Human).